We begin with the raw amino-acid sequence, 531 residues long: Light-independent protochlorophyllide reductase subunit B (531 aa).

Residue Asp-36 participates in [4Fe-4S] cluster binding. Asp-291 serves as the catalytic Proton donor. Residue 426-427 (GL) coordinates substrate.

It belongs to the ChlB/BchB/BchZ family. In terms of assembly, protochlorophyllide reductase is composed of three subunits; ChlL, ChlN and ChlB. Forms a heterotetramer of two ChlB and two ChlN subunits. [4Fe-4S] cluster serves as cofactor.

The enzyme catalyses chlorophyllide a + oxidized 2[4Fe-4S]-[ferredoxin] + 2 ADP + 2 phosphate = protochlorophyllide a + reduced 2[4Fe-4S]-[ferredoxin] + 2 ATP + 2 H2O. It participates in porphyrin-containing compound metabolism; chlorophyll biosynthesis (light-independent). Its function is as follows. Component of the dark-operative protochlorophyllide reductase (DPOR) that uses Mg-ATP and reduced ferredoxin to reduce ring D of protochlorophyllide (Pchlide) to form chlorophyllide a (Chlide). This reaction is light-independent. The NB-protein (ChlN-ChlB) is the catalytic component of the complex. The chain is Light-independent protochlorophyllide reductase subunit B from Prochlorococcus marinus (strain MIT 9211).